Here is an 830-residue protein sequence, read N- to C-terminus: Periplasmic nitrate reductase (830 aa).

The tat-type signal signal peptide spans 1–30 (MTTRREFIKRSAAVTAACTAGISLSGEASN). Residues 40–96 (LKWSKAPCRFCGTGCSVNVAVKDNQVVATHGDIQSEVNRGLNCVKGYFLSKIMYGKD) enclose the 4Fe-4S Mo/W bis-MGD-type domain. [4Fe-4S] cluster-binding residues include Cys-47, Cys-50, Cys-54, and Cys-82. Residues Lys-84, Gln-151, Asn-176, Cys-180, 213 to 220 (WGSNMAEM), 244 to 248 (STFQH), Met-374, Gln-378, Asn-484, 510 to 511 (SE), Lys-533, Asp-560, and 720 to 729 (TGRVLEHWHS) each bind Mo-bis(molybdopterin guanine dinucleotide). Residue Trp-796 coordinates substrate. Asn-804 and Lys-821 together coordinate Mo-bis(molybdopterin guanine dinucleotide).

It belongs to the prokaryotic molybdopterin-containing oxidoreductase family. NasA/NapA/NarB subfamily. Component of the periplasmic nitrate reductase NapAB complex composed of NapA and NapB. [4Fe-4S] cluster serves as cofactor. Requires Mo-bis(molybdopterin guanine dinucleotide) as cofactor. Post-translationally, predicted to be exported by the Tat system. The position of the signal peptide cleavage has not been experimentally proven.

Its subcellular location is the periplasm. The catalysed reaction is 2 Fe(II)-[cytochrome] + nitrate + 2 H(+) = 2 Fe(III)-[cytochrome] + nitrite + H2O. In terms of biological role, catalytic subunit of the periplasmic nitrate reductase complex NapAB. Receives electrons from NapB and catalyzes the reduction of nitrate to nitrite. The protein is Periplasmic nitrate reductase of Hahella chejuensis (strain KCTC 2396).